The primary structure comprises 274 residues: Penicillin-insensitive murein endopeptidase (274 aa).

A signal peptide spans 1-19; sequence MKKTAIALLAWFVSSASLA. 3 disulfide bridges follow: Cys-44–Cys-265, Cys-187–Cys-235, and Cys-216–Cys-223. Residues His-110, His-113, Asp-120, Asp-147, His-150, and His-211 each coordinate Zn(2+). Positions 225 to 274 are disordered; sequence DQPLPPPGDGCGAELQSWFEPPKLGTTKPEKKTPPPLPPSCQALLDEHVL.

Belongs to the peptidase M74 family. Dimer. Zn(2+) serves as cofactor.

The protein resides in the periplasm. In terms of biological role, murein endopeptidase that cleaves the D-alanyl-meso-2,6-diamino-pimelyl amide bond that connects peptidoglycan strands. Likely plays a role in the removal of murein from the sacculus. The polypeptide is Penicillin-insensitive murein endopeptidase (Salmonella paratyphi B (strain ATCC BAA-1250 / SPB7)).